A 462-amino-acid polypeptide reads, in one-letter code: Gamma-aminobutyric acid receptor subunit alpha-5 (462 aa).

An N-terminal signal peptide occupies residues 1–31 (MDNGMFSGFIMIKNLLLFCISMNLSSHFGFS). Residues 32 to 260 (QMPTSSVKDE…FHLKRKIGYF (229 aa)) lie on the Extracellular side of the membrane. Asn45 is a glycosylation site (N-linked (GlcNAc...) asparagine). Arg101 provides a ligand contact to 4-aminobutanoate. Asn145 carries an N-linked (GlcNAc...) asparagine glycan. Thr164 contributes to the 4-aminobutanoate binding site. A disulfide bridge connects residues Cys173 and Cys187. 2 N-linked (GlcNAc...) asparagine glycosylation sites follow: Asn207 and Asn236. Residues 261–281 (VIQTYLPCIMTVILSQVSFWL) traverse the membrane as a helical segment. Residues 282 to 286 (NRESV) lie on the Cytoplasmic side of the membrane. A helical membrane pass occupies residues 287–308 (PARTVFGVTTVLTMTTLSISAR). Residues 309–318 (NSLPKVAYAT) lie on the Extracellular side of the membrane. The helical transmembrane segment at 319–340 (AMDWFIAVCYAFVFSALIEFAT) threads the bilayer. Over 341–427 (VNYFTKRGWA…TYNSISKIDK (87 aa)) the chain is Cytoplasmic. Lys355 is covalently cross-linked (Glycyl lysine isopeptide (Lys-Gly) (interchain with G-Cter in ubiquitin)). The segment at 377–412 (FTTGKMSHPPNIPKEQTPAGTSNTTSVSVKPSEEKT) is disordered. A helical membrane pass occupies residues 428–448 (MSRIVFPVLFGTFNLVYWATY). Over 449–462 (LNREPVIKGAASPK) the chain is Extracellular.

Belongs to the ligand-gated ion channel (TC 1.A.9) family. Gamma-aminobutyric acid receptor (TC 1.A.9.5) subfamily. GABRA5 sub-subfamily. As to quaternary structure, heteropentamer, formed by a combination of alpha (GABRA1-6), beta (GABRB1-3), gamma (GABRG1-3), delta (GABRD), epsilon (GABRE), rho (GABRR1-3), pi (GABRP) and theta (GABRQ) chains, each subunit exhibiting distinct physiological and pharmacological properties.

The protein localises to the postsynaptic cell membrane. It is found in the cell membrane. The catalysed reaction is chloride(in) = chloride(out). Functionally, alpha subunit of the heteropentameric ligand-gated chloride channel gated by gamma-aminobutyric acid (GABA), a major inhibitory neurotransmitter in the brain. GABA-gated chloride channels, also named GABA(A) receptors (GABAAR), consist of five subunits arranged around a central pore and contain GABA active binding site(s) located at the alpha and beta subunit interface(s). When activated by GABA, GABAARs selectively allow the flow of chloride anions across the cell membrane down their electrochemical gradient. GABAARs containing alpha-5/GABRA5 subunits are mainly extrasynaptic and contribute to the tonic GABAergic inhibition in the hippocampus. Extrasynaptic alpha-5-containing GABAARs in CA1 pyramidal neurons play a role in learning and memory processes. The chain is Gamma-aminobutyric acid receptor subunit alpha-5 from Homo sapiens (Human).